The chain runs to 177 residues: Decaprenylphosphoryl-5-phosphoribose phosphatase (177 aa).

The next 4 membrane-spanning stretches (helical) occupy residues His35 to Pro55, Leu62 to Val82, Gly124 to Val144, and Val150 to Gly170.

Belongs to the PA-phosphatase related phosphoesterase family.

The protein localises to the cell membrane. It carries out the reaction trans,octa-cis-decaprenylphospho-beta-D-ribofuranose 5-phosphate + H2O = trans,octa-cis-decaprenylphospho-beta-D-ribofuranose + phosphate. The protein operates within cell wall biogenesis; cell wall polysaccharide biosynthesis. Phosphatase involved in the biosynthesis of decaprenylphosphoryl arabinose (DPA), which serves as the arabinose donor for the biosynthesis of arabinogalactan, the major mycobacterial cell wall polysaccharide. Catalyzes the dephosphorylation of decaprenylphosphoryl-5-phosphoribose (DPPR) to decaprenyl-phosphoribose (DPR). This Mycobacterium tuberculosis (strain CDC 1551 / Oshkosh) protein is Decaprenylphosphoryl-5-phosphoribose phosphatase.